Reading from the N-terminus, the 613-residue chain is Phostensin (613 aa).

A compositionally biased stretch (basic and acidic residues) spans 15 to 33 (RRQEEASVRGREKAERERL). Disordered regions lie at residues 15 to 231 (RRQE…SAYQ) and 266 to 505 (GEER…GKKR). 5 positions are modified to phosphoserine: serine 54, serine 125, serine 133, serine 175, and serine 195. 2 stretches are compositionally biased toward basic and acidic residues: residues 104 to 154 (RSEE…ERRL) and 167 to 191 (LEAR…EPWK). Residue threonine 199 is modified to Phosphothreonine. Residues 199 to 221 (TPERSLRLAESREQSPRRKEVES) show a composition bias toward basic and acidic residues. Serine 224 is subject to Phosphoserine. The segment covering 266-282 (GEERQGYSEKCGRKEEW) has biased composition (basic and acidic residues). The segment covering 301–310 (REAQGSSSTG) has biased composition (polar residues). Basic and acidic residues-rich tracts occupy residues 314–327 (AEQR…RGMK), 340–350 (KAREWTPRDIE), and 357–367 (EPSESAEKRLE). 2 positions are modified to phosphoserine: serine 368 and serine 432. Residues 424–446 (QPPPPAPLSPPPPAPTAPQPPGD) show a composition bias toward pro residues. Lysine 457 bears the N6-acetyllysine mark. Residues 476–499 (PRRSVPPTTPATPTSPATADAAVP) are compositionally biased toward low complexity. Phosphoserine occurs at positions 490 and 530. The interval 552–594 (QYPSESSVLEELGPEPEVPSAPNPPAAQPDDEEDEEELLLLQP) is disordered. Residues 567 to 578 (PEVPSAPNPPAA) are compositionally biased toward pro residues. The segment covering 580 to 589 (PDDEEDEEEL) has biased composition (acidic residues).

In terms of assembly, interacts with Protein phosphatase 1 (PP1).

The protein resides in the cytoplasm. It localises to the cytoskeleton. Functionally, may target protein phosphatase 1 to F-actin cytoskeleton. The protein is Phostensin (PPP1R18) of Macaca mulatta (Rhesus macaque).